Consider the following 672-residue polypeptide: MAKSDGDDPLRPASPRLRSSRRHSLRYSAYTGGPDPLAPPVDLRDALEQIGQDVMAGASPRRALSELLRRGTRNLTGADRLAAEVNRRRRELLRRNNLDGTLQEIKKLLDEAVLAERKELARALDDDARFAELQLDALPVSPAKAVQELAEYRWRSGQAREKYEQIKDLLGRELLDQRFAGMKQALAGATDDDRRRVTEMLDDLNDLLDKHARGEDTQRDFDEFMTKHGEFFPENPRNVEELLDSLAKRAAAAQRFRNSLSQEQRDELDALAQQAFGSPALMRALDRLDAHLQAARPGEDWTGSQQFSGDNPFGMGEGTQALADIAELEQLAEQLSQSYPGASMDDVDLDALARQLGDQAAVDARTLAELERALVNQGFLDRGSDGQWRLSPKAMRRLGETALRDVAQQLSGRHGERDHRRAGAAGELTGATRPWQFGDTEPWHVARTLTNAVLRQAAAVHDRIRITVEDVEVAETETRTQAAVALLVDTSFSMVMENRWLPMKRTALALHHLVCTRFRSDALQIIAFGRYARTVTAAELTGLAGVYEQGTNLHHALALAGRHLRRHAGAQPVVLVVTDGEPTAHLEDFDGDGTSVFFDYPPHPRTIAHTVRGFDDMARLGAQVTIFRLGSDPGLARFIDQVARRVQGRVVVPDLDGLGAAVVGDYLRFRRR.

Basic and acidic residues predominate over residues 1 to 10 (MAKSDGDDPL). The tract at residues 1-40 (MAKSDGDDPLRPASPRLRSSRRHSLRYSAYTGGPDPLAPP) is disordered.

This is an uncharacterized protein from Mycobacterium tuberculosis (strain CDC 1551 / Oshkosh).